We begin with the raw amino-acid sequence, 500 residues long: MSEKFILSIDQGTTSSRAILFNHKGEIVESAQKEFEQFFPKPGWVEHDANEIWTSVLACIADVLRKADIEANQIEGIGITNQRETTVVWDKNTGRPIYKAIVWQSRQTEGICKELKEQGHEDTIRHKTGLLIDPYFSGTKVKWILDNVDGAREKAEAGELSFGTIDSWLIYRLSGGKTHVTDYSNASRTLMFNIYDLKWDDELLEILDVPKSMLPEVKPSSEVYANTVSYHFFGEEVPIAGVAGDQQAALFGQACFDQGMAKNTYGTGCFLLMNTGEEPVRSKHGLLTTIAWGVDGKVEYALEGSIFVAGSAIQWLRDGLRLIESSPQSEALASQVETTDGVYLVPAFVGLGTPYWDSDARGAVFGLTRGTTKEHFVRATLESLAYQTKDVMDAMLADSDIDLKKLRVDGGAVKNNLLMQFQSDILGVTVERPVVQETTALGSAYLAGLAVGFWKDKEEIAKQWLNEKTFENEMSEEESSYLYKGWQKAVEATRSFKFES.

Thr13 contacts ADP. Thr13, Thr14, and Ser15 together coordinate ATP. Thr13 contributes to the sn-glycerol 3-phosphate binding site. ADP is bound at residue Arg17. Sn-glycerol 3-phosphate-binding residues include Arg83, Glu84, and Tyr135. The glycerol site is built by Arg83, Glu84, and Tyr135. His231 is subject to Phosphohistidine; by HPr. Asp245 is a binding site for sn-glycerol 3-phosphate. Residues Asp245 and Gln246 each coordinate glycerol. The ADP site is built by Thr267 and Gly310. Residues Thr267, Gly310, Gln314, and Gly411 each contribute to the ATP site. Residues Gly411 and Asn415 each coordinate ADP.

The protein belongs to the FGGY kinase family. Homotetramer and homodimer (in equilibrium). Post-translationally, the phosphoenolpyruvate-dependent sugar phosphotransferase system (PTS), including enzyme I, and histidine-containing protein (HPr) are required for the phosphorylation, which leads to the activation of the enzyme.

It catalyses the reaction glycerol + ATP = sn-glycerol 3-phosphate + ADP + H(+). Its pathway is polyol metabolism; glycerol degradation via glycerol kinase pathway; sn-glycerol 3-phosphate from glycerol: step 1/1. Its activity is regulated as follows. Activated by phosphorylation and inhibited by fructose 1,6-bisphosphate (FBP). Functionally, key enzyme in the regulation of glycerol uptake and metabolism. Catalyzes the phosphorylation of glycerol to yield sn-glycerol 3-phosphate. In Oceanobacillus iheyensis (strain DSM 14371 / CIP 107618 / JCM 11309 / KCTC 3954 / HTE831), this protein is Glycerol kinase.